A 217-amino-acid chain; its full sequence is Small ribosomal subunit protein uS3 (217 aa).

Residues 40-110 (IRDLINKWFN…EVYINIHEVR (71 aa)) enclose the KH type-2 domain.

Belongs to the universal ribosomal protein uS3 family. As to quaternary structure, part of the 30S ribosomal subunit. Forms a tight complex with proteins S10 and S14.

In terms of biological role, binds the lower part of the 30S subunit head. Binds mRNA in the 70S ribosome, positioning it for translation. This is Small ribosomal subunit protein uS3 from Rickettsia prowazekii (strain Madrid E).